The following is a 400-amino-acid chain: Serine/threonine transporter SstT (400 aa).

9 helical membrane passes run 9 to 29 (LVTQ…VWPA), 36 to 56 (ILGS…VFVL), 75 to 95 (VLVL…VASM), 134 to 154 (ALLE…GLAL), 175 to 195 (VIQL…ASTF), 209 to 229 (LLAV…PLIV), 281 to 301 (IAIP…ISVL), 323 to 343 (VVAS…LLLI), and 349 to 369 (LFGI…IIGI).

The protein belongs to the dicarboxylate/amino acid:cation symporter (DAACS) (TC 2.A.23) family.

The protein localises to the cell inner membrane. The enzyme catalyses L-serine(in) + Na(+)(in) = L-serine(out) + Na(+)(out). The catalysed reaction is L-threonine(in) + Na(+)(in) = L-threonine(out) + Na(+)(out). Functionally, involved in the import of serine and threonine into the cell, with the concomitant import of sodium (symport system). The protein is Serine/threonine transporter SstT of Acidovorax sp. (strain JS42).